A 124-amino-acid chain; its full sequence is Small ribosomal subunit protein uS12 (124 aa).

Residues 1 to 25 are disordered; the sequence is MARINQLVRKPRRARAKKSDVPALE. Aspartate 89 bears the 3-methylthioaspartic acid mark. Residues 103 to 124 form a disordered region; that stretch reads DTAGVSGRRRGRSKYGEKKPKE.

The protein belongs to the universal ribosomal protein uS12 family. In terms of assembly, part of the 30S ribosomal subunit. Contacts proteins S8 and S17. May interact with IF1 in the 30S initiation complex.

With S4 and S5 plays an important role in translational accuracy. Its function is as follows. Interacts with and stabilizes bases of the 16S rRNA that are involved in tRNA selection in the A site and with the mRNA backbone. Located at the interface of the 30S and 50S subunits, it traverses the body of the 30S subunit contacting proteins on the other side and probably holding the rRNA structure together. The combined cluster of proteins S8, S12 and S17 appears to hold together the shoulder and platform of the 30S subunit. This chain is Small ribosomal subunit protein uS12, found in Coxiella burnetii (strain Dugway 5J108-111).